Here is a 637-residue protein sequence, read N- to C-terminus: Early transcription factor 70 kDa subunit (637 aa).

The 154-residue stretch at 32-185 (RTIIDENRSV…GHIIDLMSEE (154 aa)) folds into the Helicase ATP-binding domain. 45-52 (HIMGSGKT) is a binding site for ATP. A DEXH box motif is present at residues 135–138 (DEAH). Residues 327-507 (KFKYFINRIQ…VLPFDIKKLL (181 aa)) enclose the Helicase C-terminal domain.

Belongs to the helicase family. VETF subfamily. In terms of assembly, heterodimer of a 70 kDa and a 82 kDa subunit. Part of the early transcription complex composed of ETF, RAP94/OPG109, and the DNA-directed RNA polymerase.

The protein localises to the virion. Acts with RNA polymerase to initiate transcription from early gene promoters. Is recruited by the RPO-associated protein of 94 kDa RAP94/OPG109 to form the early transcription complex, which also contains the core RNA polymerase. ETF heterodimer binds to early gene promoters. The chain is Early transcription factor 70 kDa subunit (OPG118) from Homo sapiens (Human).